The following is a 459-amino-acid chain: Plasma alpha-L-fucosidase (459 aa).

Positions methionine 1 to alanine 23 are cleaved as a signal peptide. 2 N-linked (GlcNAc...) asparagine glycosylation sites follow: asparagine 163 and asparagine 231. Serine 293 bears the Phosphoserine mark. The N-linked (GlcNAc...) asparagine glycan is linked to asparagine 369.

Belongs to the glycosyl hydrolase 29 family. As to quaternary structure, homotetramer.

It is found in the secreted. The enzyme catalyses an alpha-L-fucoside + H2O = L-fucose + an alcohol. Functionally, alpha-L-fucosidase is responsible for hydrolyzing the alpha-1,6-linked fucose joined to the reducing-end N-acetylglucosamine of the carbohydrate moieties of glycoproteins. The protein is Plasma alpha-L-fucosidase (Fuca2) of Rattus norvegicus (Rat).